Reading from the N-terminus, the 512-residue chain is Methionine--tRNA ligase (512 aa).

The short motif at 11–21 is the 'HIGH' region element; it reads YYASGKPHIGH. The Zn(2+) site is built by C126, C129, C143, and H147. The 'KMSKS' region motif lies at 301-305; that stretch reads KMSKS. An ATP-binding site is contributed by K304.

Belongs to the class-I aminoacyl-tRNA synthetase family. MetG type 2A subfamily. As to quaternary structure, monomer. It depends on Zn(2+) as a cofactor.

The protein localises to the cytoplasm. The enzyme catalyses tRNA(Met) + L-methionine + ATP = L-methionyl-tRNA(Met) + AMP + diphosphate. Functionally, is required not only for elongation of protein synthesis but also for the initiation of all mRNA translation through initiator tRNA(fMet) aminoacylation. The sequence is that of Methionine--tRNA ligase (metG) from Mycoplasma pneumoniae (strain ATCC 29342 / M129 / Subtype 1) (Mycoplasmoides pneumoniae).